We begin with the raw amino-acid sequence, 346 residues long: E3 ubiquitin-protein ligase ARK2C (346 aa).

Disordered regions lie at residues 23 to 76 (PFQR…QHSG) and 267 to 288 (PHKYKKRRPQDGKGKKDEGEES). Residues 266 to 268 (FPH) are ubiquitin binding. Residues 275–284 (PQDGKGKKDE) are compositionally biased toward basic and acidic residues. Cys-294 and Cys-297 together coordinate Zn(2+). The RING-type; atypical zinc-finger motif lies at 294 to 335 (CTICLSMLEDGEDVRRLPCMHLFHQLCVDQWLAMSKKCPICR). Residues 309–313 (RLPCM) form a ubiquitin binding region. Residues His-317 and Cys-320 each contribute to the Zn(2+) site.

This sequence belongs to the Arkadia family. As to quaternary structure, monomer; binding to the ubiquitin-conjugating enzyme E2 does not trigger homodimerization.

The protein resides in the nucleus. The enzyme catalyses S-ubiquitinyl-[E2 ubiquitin-conjugating enzyme]-L-cysteine + [acceptor protein]-L-lysine = [E2 ubiquitin-conjugating enzyme]-L-cysteine + N(6)-ubiquitinyl-[acceptor protein]-L-lysine.. Binds free ubiquitin non-covalently via its RING-type zinc finger. Ubiquitin-binding leads to enhance the E3 ubiquitin-protein ligase activity by stabilizing the ubiquitin-conjugating enzyme E2 (donor ubiquitin) in the 'closed' conformation and activating ubiquitin transfer. Its function is as follows. E3 ubiquitin-protein ligase that acts as a regulator of motor axon elongation. Required for efficient motor axon extension in the dorsal forelimb by enhancing the transcriptional responses of the SMAD1/SMAD5/SMAD8 effectors, which are activated downstream of BMP. Acts by mediating ubiquitination and degradation of SMAD inhibitors such as SMAD6, SMAD7, SKI and SNON isoform of SKIL. In Homo sapiens (Human), this protein is E3 ubiquitin-protein ligase ARK2C.